A 423-amino-acid polypeptide reads, in one-letter code: Pleckstrin homology domain-containing family O member 1 (423 aa).

3 disordered regions span residues 1-21 (MEKNNSAKRGQQDGNQQSAQP), 81-100 (RKSKSRSKKNHSKFTLAHSR), and 217-277 (LAAG…HSEK). Residues 7-20 (AKRGQQDGNQQSAQ) show a composition bias toward polar residues. One can recognise a PH domain in the interval 20-131 (QPEKVGWVRK…WINALNSAIT (112 aa)). The span at 83–92 (SKSRSKKNHS) shows a compositional bias: basic residues. Positions 222 to 259 (RRSDSENVKLSEKGRSGTLPRHEVTSWDKPTQRKDSLD) are enriched in basic and acidic residues.

Post-translationally, C-terminal fragments could be released during apoptosis via caspase-3-dependent cleavage.

Its subcellular location is the membrane. It localises to the nucleus. The protein resides in the cytoplasm. Functionally, plays a role in the regulation of the actin cytoskeleton through its interactions with actin capping protein (CP). The polypeptide is Pleckstrin homology domain-containing family O member 1 (PLEKHO1) (Gallus gallus (Chicken)).